A 242-amino-acid chain; its full sequence is U1 small nuclear ribonucleoprotein C (242 aa).

The segment at 3-35 (YLGDYCDVYLTHDSMSVRKAHNSGRNHLRNVVE) adopts a Matrin-type; degenerate zinc-finger fold. The segment at 60 to 242 (GQASSNPMLQ…SSPGPSQEGK (183 aa)) is disordered. Pro residues-rich tracts occupy residues 90 to 107 (MLPP…PGAP), 136 to 149 (PPMP…PLPN), 156 to 183 (PFPP…PPIP), and 201 to 213 (PVPP…PGAP). The segment covering 231-242 (PASSPGPSQEGK) has biased composition (polar residues).

Belongs to the U1 small nuclear ribonucleoprotein C family. In terms of assembly, U1 snRNP is composed of the 7 core Sm proteins B/B', D1, D2, D3, E, F and G that assemble in a heptameric protein ring on the Sm site of the small nuclear RNA to form the core snRNP, and at least 3 U1 snRNP-specific proteins U1-70K, U1-A and U1-C. U1-C interacts with U1 snRNA and the 5' splice-site region of the pre-mRNA.

It localises to the nucleus. In terms of biological role, component of the spliceosomal U1 snRNP, which is essential for recognition of the pre-mRNA 5' splice-site and the subsequent assembly of the spliceosome. U1-C is directly involved in initial 5' splice-site recognition for both constitutive and regulated alternative splicing. The interaction with the 5' splice-site seems to precede base-pairing between the pre-mRNA and the U1 snRNA. Stimulates commitment or early (E) complex formation by stabilizing the base pairing of the 5' end of the U1 snRNA and the 5' splice-site region. In Ajellomyces capsulatus (strain G186AR / H82 / ATCC MYA-2454 / RMSCC 2432) (Darling's disease fungus), this protein is U1 small nuclear ribonucleoprotein C.